Reading from the N-terminus, the 352-residue chain is Uroporphyrinogen decarboxylase (352 aa).

Substrate-binding positions include 26–30, Asp76, Tyr153, Ser208, and His323; that span reads RQAGR.

The protein belongs to the uroporphyrinogen decarboxylase family. In terms of assembly, homodimer.

The protein localises to the cytoplasm. It carries out the reaction uroporphyrinogen III + 4 H(+) = coproporphyrinogen III + 4 CO2. Its pathway is porphyrin-containing compound metabolism; protoporphyrin-IX biosynthesis; coproporphyrinogen-III from 5-aminolevulinate: step 4/4. Catalyzes the decarboxylation of four acetate groups of uroporphyrinogen-III to yield coproporphyrinogen-III. The chain is Uroporphyrinogen decarboxylase from Synechococcus sp. (strain CC9605).